We begin with the raw amino-acid sequence, 239 residues long: Serine protease SplC (239 aa).

The N-terminal stretch at 1–36 (MNKNIVIKSMAALAILTSVTGINAAVVDETQQIANA) is a signal peptide. Catalysis depends on charge relay system residues H75, D113, and S193.

This sequence belongs to the peptidase S1B family.

It is found in the secreted. This is Serine protease SplC (splC) from Staphylococcus aureus (strain bovine RF122 / ET3-1).